A 92-amino-acid polypeptide reads, in one-letter code: Elongation factor 1-beta (92 aa).

Belongs to the EF-1-beta/EF-1-delta family.

Its function is as follows. Promotes the exchange of GDP for GTP in EF-1-alpha/GDP, thus allowing the regeneration of EF-1-alpha/GTP that could then be used to form the ternary complex EF-1-alpha/GTP/AAtRNA. The protein is Elongation factor 1-beta (ef1b) of Pyrobaculum aerophilum (strain ATCC 51768 / DSM 7523 / JCM 9630 / CIP 104966 / NBRC 100827 / IM2).